The chain runs to 302 residues: Sulfate adenylyltransferase subunit 2 (302 aa).

This sequence belongs to the PAPS reductase family. CysD subfamily. In terms of assembly, heterodimer composed of CysD, the smaller subunit, and CysN.

It carries out the reaction sulfate + ATP + H(+) = adenosine 5'-phosphosulfate + diphosphate. It functions in the pathway sulfur metabolism; hydrogen sulfide biosynthesis; sulfite from sulfate: step 1/3. Functionally, with CysN forms the ATP sulfurylase (ATPS) that catalyzes the adenylation of sulfate producing adenosine 5'-phosphosulfate (APS) and diphosphate, the first enzymatic step in sulfur assimilation pathway. APS synthesis involves the formation of a high-energy phosphoric-sulfuric acid anhydride bond driven by GTP hydrolysis by CysN coupled to ATP hydrolysis by CysD. In Zymomonas mobilis subsp. mobilis (strain ATCC 31821 / ZM4 / CP4), this protein is Sulfate adenylyltransferase subunit 2.